A 359-amino-acid polypeptide reads, in one-letter code: Probable ribonucleotide transport ATP-binding protein mkl (359 aa).

An ABC transporter domain is found at 28 to 264 (IEVNGLTKSF…DEPVVRQFLN (237 aa)). 60–67 (GPSGTGKS) contributes to the ATP binding site.

It belongs to the ABC transporter superfamily.

Not known, could be involved in the transport of ribonucleotides. The chain is Probable ribonucleotide transport ATP-binding protein mkl (mkl) from Mycobacterium bovis (strain ATCC BAA-935 / AF2122/97).